The chain runs to 430 residues: Cortical fragment-lytic enzyme (430 aa).

LysM domains are found at residues 3-47 (QIVT…ALIV) and 52-96 (NNYY…QLYI). Residues 104-430 (VESIAYLQPS…VENFTITKKG (327 aa)) enclose the GH18 domain. Glu-219 (proton donor) is an active-site residue.

The protein belongs to the glycosyl hydrolase 18 family. Chitinase class II subfamily.

It localises to the forespore. N-acetylglucosaminidase involved in cortex peptidoglycan degradation during germination. Cleaves only partially degraded spore peptidoglycans. Recognizes muramic acid delta-lactam residues specific to spore peptidoglycans. The sequence is that of Cortical fragment-lytic enzyme from Bacillus anthracis.